A 76-amino-acid polypeptide reads, in one-letter code: Cytochrome c oxidase subunit 6C-1 (76 aa).

Residues 4 to 14 (GALLPKPQMHD) lie on the Mitochondrial matrix side of the membrane. The helical transmembrane segment at 15-55 (PLSKRLWVHIVGAFIVDLGVAAAHKFGAAKPRKKAYADFYR) threads the bilayer. Residues 56-76 (NHDPMKDFDEMRKAGVFRSVK) are Mitochondrial intermembrane-facing.

Belongs to the cytochrome c oxidase subunit 6c family. As to quaternary structure, component of the cytochrome c oxidase (complex IV, CIV), a multisubunit enzyme composed of 14 subunits. The complex is composed of a catalytic core of 3 subunits MT-CO1, MT-CO2 and MT-CO3, encoded in the mitochondrial DNA, and 11 supernumerary subunits COX4I, COX5A, COX5B, COX6A, COX6B, COX6C, COX7A, COX7B, COX7C, COX8 and NDUFA4, which are encoded in the nuclear genome. The complex exists as a monomer or a dimer and forms supercomplexes (SCs) in the inner mitochondrial membrane with NADH-ubiquinone oxidoreductase (complex I, CI) and ubiquinol-cytochrome c oxidoreductase (cytochrome b-c1 complex, complex III, CIII), resulting in different assemblies (supercomplex SCI(1)III(2)IV(1) and megacomplex MCI(2)III(2)IV(2)).

It is found in the mitochondrion inner membrane. It functions in the pathway energy metabolism; oxidative phosphorylation. Functionally, component of the cytochrome c oxidase, the last enzyme in the mitochondrial electron transport chain which drives oxidative phosphorylation. The respiratory chain contains 3 multisubunit complexes succinate dehydrogenase (complex II, CII), ubiquinol-cytochrome c oxidoreductase (cytochrome b-c1 complex, complex III, CIII) and cytochrome c oxidase (complex IV, CIV), that cooperate to transfer electrons derived from NADH and succinate to molecular oxygen, creating an electrochemical gradient over the inner membrane that drives transmembrane transport and the ATP synthase. Cytochrome c oxidase is the component of the respiratory chain that catalyzes the reduction of oxygen to water. Electrons originating from reduced cytochrome c in the intermembrane space (IMS) are transferred via the dinuclear copper A center (CU(A)) of subunit 2 and heme A of subunit 1 to the active site in subunit 1, a binuclear center (BNC) formed by heme A3 and copper B (CU(B)). The BNC reduces molecular oxygen to 2 water molecules using 4 electrons from cytochrome c in the IMS and 4 protons from the mitochondrial matrix. This Rattus norvegicus (Rat) protein is Cytochrome c oxidase subunit 6C-1 (Cox6c1).